A 238-amino-acid polypeptide reads, in one-letter code: Ribonuclease PH (238 aa).

Residues Arg-86 and 124–126 (GTR) each bind phosphate.

The protein belongs to the RNase PH family. As to quaternary structure, homohexameric ring arranged as a trimer of dimers.

It carries out the reaction tRNA(n+1) + phosphate = tRNA(n) + a ribonucleoside 5'-diphosphate. Its function is as follows. Phosphorolytic 3'-5' exoribonuclease that plays an important role in tRNA 3'-end maturation. Removes nucleotide residues following the 3'-CCA terminus of tRNAs; can also add nucleotides to the ends of RNA molecules by using nucleoside diphosphates as substrates, but this may not be physiologically important. Probably plays a role in initiation of 16S rRNA degradation (leading to ribosome degradation) during starvation. The protein is Ribonuclease PH of Haemophilus influenzae (strain 86-028NP).